A 144-amino-acid polypeptide reads, in one-letter code: Putative pre-16S rRNA nuclease (144 aa).

The protein belongs to the YqgF nuclease family.

The protein localises to the cytoplasm. Could be a nuclease involved in processing of the 5'-end of pre-16S rRNA. This chain is Putative pre-16S rRNA nuclease, found in Pseudomonas paraeruginosa (strain DSM 24068 / PA7) (Pseudomonas aeruginosa (strain PA7)).